The following is a 527-amino-acid chain: Peptide chain release factor 3 (527 aa).

Positions N9 to Q278 constitute a tr-type G domain. Residues S18 to T25, D86 to H90, and N140 to D143 each bind GTP.

The protein belongs to the TRAFAC class translation factor GTPase superfamily. Classic translation factor GTPase family. PrfC subfamily.

The protein localises to the cytoplasm. Functionally, increases the formation of ribosomal termination complexes and stimulates activities of RF-1 and RF-2. It binds guanine nucleotides and has strong preference for UGA stop codons. It may interact directly with the ribosome. The stimulation of RF-1 and RF-2 is significantly reduced by GTP and GDP, but not by GMP. In Haemophilus influenzae (strain 86-028NP), this protein is Peptide chain release factor 3.